A 488-amino-acid polypeptide reads, in one-letter code: Glutamyl-tRNA(Gln) amidotransferase subunit A (488 aa).

Active-site charge relay system residues include K77 and S152. The Acyl-ester intermediate role is filled by S176.

It belongs to the amidase family. GatA subfamily. Heterotrimer of A, B and C subunits.

It catalyses the reaction L-glutamyl-tRNA(Gln) + L-glutamine + ATP + H2O = L-glutaminyl-tRNA(Gln) + L-glutamate + ADP + phosphate + H(+). Functionally, allows the formation of correctly charged Gln-tRNA(Gln) through the transamidation of misacylated Glu-tRNA(Gln) in organisms which lack glutaminyl-tRNA synthetase. The reaction takes place in the presence of glutamine and ATP through an activated gamma-phospho-Glu-tRNA(Gln). This Streptococcus pyogenes serotype M6 (strain ATCC BAA-946 / MGAS10394) protein is Glutamyl-tRNA(Gln) amidotransferase subunit A.